Here is a 246-residue protein sequence, read N- to C-terminus: Thiamine import ATP-binding protein ThiQ (246 aa).

Positions 10–239 constitute an ABC transporter domain; sequence VKLDALAFAY…QGPPAFARYL (230 aa). 41–48 lines the ATP pocket; that stretch reads GPSGSGKS.

This sequence belongs to the ABC transporter superfamily. Thiamine importer (TC 3.A.1.19.1) family. The complex is composed of two ATP-binding proteins (ThiQ), two transmembrane proteins (ThiP) and a solute-binding protein (ThiB).

Its subcellular location is the cell inner membrane. It carries out the reaction thiamine(out) + ATP + H2O = thiamine(in) + ADP + phosphate + H(+). Functionally, part of the ABC transporter complex ThiBPQ involved in thiamine import. Responsible for energy coupling to the transport system. This is Thiamine import ATP-binding protein ThiQ from Chelativorans sp. (strain BNC1).